The sequence spans 288 residues: 2-hydroxy-6-oxononadienedioate/2-hydroxy-6-oxononatrienedioate hydrolase (288 aa).

Positions 38–273 (VVLLHGSGPG…DCGHWAQWEH (236 aa)) constitute an AB hydrolase-1 domain. Catalysis depends on His267, which acts as the Proton acceptor.

This sequence belongs to the AB hydrolase superfamily. MhpC family. Homodimer.

The enzyme catalyses (2Z,4E)-2-hydroxy-6-oxonona-2,4-dienedioate + H2O = (2Z)-2-hydroxypenta-2,4-dienoate + succinate + H(+). The catalysed reaction is (2Z,4E,7E)-2-hydroxy-6-oxonona-2,4,7-trienedioate + H2O = (2Z)-2-hydroxypenta-2,4-dienoate + fumarate + H(+). Its pathway is aromatic compound metabolism; 3-phenylpropanoate degradation. Catalyzes the cleavage of the C5-C6 bond of 2-hydroxy-6-oxononadienedioate and 2-hydroxy-6-oxononatrienedioate, a dienol ring fission product of the bacterial meta-cleavage pathway for degradation of phenylpropionic acid. This chain is 2-hydroxy-6-oxononadienedioate/2-hydroxy-6-oxononatrienedioate hydrolase, found in Escherichia coli O139:H28 (strain E24377A / ETEC).